Reading from the N-terminus, the 67-residue chain is uncharacterized protein (67 aa).

This is an uncharacterized protein from Escherichia coli (strain K12).